The chain runs to 300 residues: Protein p34 (300 aa).

5 consecutive transmembrane segments (helical) span residues 14-34, 39-59, 87-107, 119-139, and 170-190; these read YLSV…WVVT, ILAS…NLVA, SIFF…SLFI, IIMY…TYVI, and LSDY…LYIF.

This sequence belongs to the cation diffusion facilitator (CDF) transporter (TC 2.A.4) family.

The protein localises to the cell membrane. This Rickettsia prowazekii (strain Madrid E) protein is Protein p34 (p34).